We begin with the raw amino-acid sequence, 356 residues long: 5-formaminoimidazole-4-carboxamide-1-(beta)-D-ribofuranosyl 5'-monophosphate synthetase (356 aa).

Positions 27 and 94 each coordinate 5-amino-1-(5-phospho-beta-D-ribosyl)imidazole-4-carboxamide. An ATP-grasp domain is found at Thr101–Ser333. ATP-binding positions include Pro145–Tyr196 and Glu226. Asn255 is a 5-amino-1-(5-phospho-beta-D-ribosyl)imidazole-4-carboxamide binding site. Mg(2+) contacts are provided by Glu293 and Glu306.

This sequence belongs to the phosphohexose mutase family. It depends on Mg(2+) as a cofactor. The cofactor is Mn(2+).

It carries out the reaction 5-amino-1-(5-phospho-beta-D-ribosyl)imidazole-4-carboxamide + formate + ATP = 5-formamido-1-(5-phospho-D-ribosyl)imidazole-4-carboxamide + ADP + phosphate. The protein operates within purine metabolism; IMP biosynthesis via de novo pathway; 5-formamido-1-(5-phospho-D-ribosyl)imidazole-4-carboxamide from 5-amino-1-(5-phospho-D-ribosyl)imidazole-4-carboxamide (formate route): step 1/1. In terms of biological role, catalyzes the ATP- and formate-dependent formylation of 5-aminoimidazole-4-carboxamide-1-beta-d-ribofuranosyl 5'-monophosphate (AICAR) to 5-formaminoimidazole-4-carboxamide-1-beta-d-ribofuranosyl 5'-monophosphate (FAICAR) in the absence of folates. The sequence is that of 5-formaminoimidazole-4-carboxamide-1-(beta)-D-ribofuranosyl 5'-monophosphate synthetase from Methanosarcina acetivorans (strain ATCC 35395 / DSM 2834 / JCM 12185 / C2A).